The sequence spans 3214 residues: MEMRLEVLTSTSIKQKKPWPRVSWLGQENEAVFLLDEKFINEINLLSGRTKKKIPSLQPLLKDVVFLATSTNDVWLSGVLTTGELFLWNKDQDCLKKIHVTEKPKEAIKAAVASSSRLYLYVAENGKRILLITSSGCILLWEYLELKNILSSKSLSLVGQWSQIVPEEAVSLPSTKDKEAVVAAVFVKNELLGDCCLCSFTFYSGECLKLTFLDIQWYENIFTSVRSLLFRVHWAQQECPLCSLIPRCASVKSRGALISAFSRDGLALAVTLNQKDPTATQVLFINTLNFVTLCGGLKGCSNKNPVVPATLTRSYWVGDISWTHDSLFLTCVLKRGSLVLLTCLGELLTLVTFGCSIEFGPAEFIPLHPLITYRPQQLPFQDSNNCVDSSASESDPLRQRFSIKAHSRLPYLIISDGYMVTTLRFLDNQSPTMLMRSLLLDSTQRLEKAYQSMMLSEPKDKGLNFRSLDSLRSSLLKHQGKESSVHCTVPRFLQAEETMKLNETTDFQDFEGEETNEVEQFVNNSFSFCNQKKDLPFDIVKEGRLEFASMFDTVHAKDASKETDRNTAELHRIQKTLLAAWTIGISKNVTEKKLMLNYTILCITHFFYILQFIKCPVPKFDLFLNKSLKRNAWVLCVFQLFHQCLSVHYWDMRYRQNMGHLIRLTANTVKLLLTQRQEHGSFSERLLACLSLLRTVTVHLNGTCSLQPEAVPAAADESRPAELDSLMVPIFQASKENWPWDSSLKIYPQVTNLVQKPGHRLIALWRLLYKKTLWYQAQLSQRTPDGDRRLTENIRHEVSVVKTLLCHVQTNLQMAGDSLNQALELTPISGEECFLLASYEKSVCLWKKALQETQEKGGRRTCFLQLRYYLSLLYCHLYCYNLNDAQGLCDHLVRELLSRSQLPVRESQDCSDCEIAVTGNVHPEAALRVVQCMARFMAAYFTNEPLFILPPHSVSVLPPLHVKTEHSLRLIPLQHSKVASVIRDQNLSNVWTVEYTLELLFIGGLIPEAVWMAHKLGDWKTSVSIGVAYQVFCKHDCNFARSKKKGMDLPLNMIPAQIFQEKLQCFLGQPVSLTKKNEKGSKYKQFTDPIEEEDASLLFGSVQEVLKASVMADADIVSETLQLLMDSAKDFSKKLWGLVPVDLYLPAPPLYCPQPAVLSEEHGDNLLLKAEKDNRQKLSGILQRVLLLFRASRCSFPVAQWYILQLRWARKVMQKIRVKGSLPSLGSFPESLLNYCKGGIAFFRPGATGDHTLDEVSIKALGCFRELCALCWMLHVRDKLSYTCRQYQKARENTKIEKDLEVGFDSCVVEHCFHALEWACRMLPFSRFFNMEELIQDIILSLIGELPPIRKVAEIFVKAFPNPEAIRVPLREKYHSLQQKLKHGVVKGPQTEELMSTVMRHVRKVRVKALKRVQRNIGAFEMDIWEPDEEDKPAATPAADRFSLGPSVSSTLTLDLGSSLLHSDADTFSETLSLEEKTWIHLYQRHTPSHMELALVGKKPSDKKKVSNQKENSQRKEDDETPGKEALPVIGVWEFERDDDEYISFLELFLSYILERDLCSSDPGIPFLTSFSGRLREHELNSLLFDVHTTLKRRQSKTISENVYRAGSCFAVTPESQEPENLSSLNSVGARHFESQALSASALGNQSGSTLENPLQSGSTSENPLQSDVMNWERRAGLFGLKQKPMYRVPDDKREKPTVQRSSNHSFWVPESIKPGRHRFRALEGSAGPPREDLPLALQSMFGDAGRLVEWMIRWSDRRLLCDPGVTPSSCKYSPVIRVKTSTAAILTSLWLLEQPYSAAYTAKNGIIKVLERHHTEPQVAAERESDVDADCPAAVAAQEGTECWNRMPAEAENHDVKDTGDEIAPVTPGSERELVHADGRHSEAGSSTQDEMDVHISDSEEGPVESLRGPSAVICRPESQLSSEHSEEEAQCSRKEPRDASVDTNLTEQKGAQISDLKEKSPTVLPLMSNGAQDTSQTPQKTQGNEHRAQLPDASESVRQMLQDEMFKLVQLQQINFLSLMQIVGPSVASLPDMHGLLQQAQSVRFGESQVSNSTKSDCIEVNSRQRVSARAQSMGECTREPGKNSPADHKRISRPDQDSSGDTQDIPHGSVPLCQLDGQPEVRGQTGAPRSFAPASFPPAPAADSGLQLLFTPAAIQKTPQLIPPARAGAPGRGFPLLHFQPKRDFKPLSLPVGRIPQVSFRPQAQPKEAWSLSDSCQPPVSQRTVHTTLPSPSDSSHCNAEAMRKAEAVLTGIPKHVNMGQYAGQGYLTPQQDSSVFIKPENVFDVKPSPPETALQNSFGLPLLHLQFKPPYVFSAPPRAFSRFPSVPGTEGRNQPQLSLLHPCLPPENTYKKPQLIPLENLLAFKRSQQKLAHSVSGQGDAAPHFVGVSMDAAGITQGKQRQSRRAKRELQEGRAQKPRRKPNVSFRPEDSLISNDSEVIIEPKEQLGHHDSQHLDKFDIPFEMLEDDINTSAGLHFMASVRKKAVGSHDASTNTDPDKEGPSQKADSESSKNPQATAASSGHEPLKVPQLLIPDIYLNVRLPSGIAEKPLSPSPPHMAGHKYIDVVDIEADDLLGLPACEEPSDEVTKQQSHPPHAPSSAELHCMAASIVDAAPPHTFQSQESASSTRGLISEPAKVTQSCQSGESWRKSVIEAKEPEIPSVAPPSDRQQDRDILEQNFQFKEQSTKLDSVGQSLLWTLLQNASPACPTPSPAVCPRPSSPACPPPSPAVCPPPSPAACPTPSPAAQKFEHLTAKLQEMDEQLVAVQTMAENIEQDFPASQVLNLHWEKAGLGNHVGLSSGPDIEKLLASKAISISEEVSLQTQEDVEEQKDAEETSETEFSEAENHSSQKTYACPSVGSAACSSVGWNIPSPGLNDSNELLESGSEDQLQVTGLTDIADIIGDLITKSGVSSHELGLTECQARSISRIQRPPDRGPRRTAEERREIKAWMRRKQKERMSEYLGQLAERRGRERNPFCPTSSPFYMTSRQIRQRQKMKREKDRLQLSKHYSQRLSQAYSLMNELLSDSAHITAPAENPLPPGPYRRQRGSSPKRENAHGQSLPVNRPGGDRHISRSSHLCKGQPRGSSQLRGSQPPCQSQKPLRSRGAAGVGPPVQQACREDEREEMVVSPWTLPSEIHRILHGRPESLLQDMSPADEEEPEPPLLAGGMDSVSESTGSILSKLDWKAVEDMVASVEDKNLSVHWALDQ.

The next 2 membrane-spanning stretches (helical) occupy residues 593–613 (KLML…LQFI) and 632–652 (AWVL…YWDM). Disordered stretches follow at residues 1496 to 1523 (VGKK…ETPG), 1644 to 1667 (GNQS…PLQS), 1879 to 1991 (DGRH…HRAQ), 2047 to 2142 (FGES…FPPA), 2214 to 2241 (SLSD…SSHC), 2398 to 2440 (GITQ…ISND), 2491 to 2529 (GSHD…GHEP), 2622 to 2650 (TFQS…QSGE), 2824 to 2855 (VSLQ…HSSQ), 3037 to 3127 (TAPA…CRED), and 3158 to 3181 (MSPA…VSES). Positions 1512-1523 (NSQRKEDDETPG) are enriched in basic and acidic residues. Positions 1932–1942 (QCSRKEPRDAS) are enriched in basic and acidic residues. 3 stretches are compositionally biased toward polar residues: residues 1943-1953 (VDTNLTEQKGA), 1971-1984 (NGAQ…QKTQ), and 2047-2068 (FGES…SRQR). Positions 2079 to 2099 (CTREPGKNSPADHKRISRPDQ) are enriched in basic and acidic residues. Residues 2215–2241 (LSDSCQPPVSQRTVHTTLPSPSDSSHC) show a composition bias toward polar residues. Residues 2500–2514 (DPDKEGPSQKADSES) are compositionally biased toward basic and acidic residues. 2 stretches are compositionally biased toward polar residues: residues 2515 to 2524 (SKNPQATAAS) and 2622 to 2634 (TFQS…STRG). Positions 2830-2848 (EDVEEQKDAEETSETEFSE) are enriched in acidic residues. The segment covering 3090-3107 (RGSSQLRGSQPPCQSQKP) has biased composition (polar residues).

Interacts with FUZ; INTU and WDPCP; the interactors are proposed to form the core CPLANE (ciliogenesis and planar polarity effectors) complex.

It is found in the membrane. The protein resides in the cell projection. Its subcellular location is the cilium. In terms of biological role, involved in ciliogenesis. Involved in the establishment of cell polarity required for directional cell migration. Proposed to act in association with the CPLANE (ciliogenesis and planar polarity effectors) complex. Involved in recruitment of peripheral IFT-A proteins to basal bodies. The polypeptide is Ciliogenesis and planar polarity effector 1 (Mus musculus (Mouse)).